A 184-amino-acid chain; its full sequence is H(2)/formate:CoB-CoM heterodisulfide,ferredoxin reductase subunit C2 (184 aa).

2 consecutive 4Fe-4S ferredoxin-type domains span residues 24–54 (GEKEVASLKSCYQCGTCTGSCPSGRRTAYRT) and 65–97 (IDSVLDSDDIWKCTTCYTCYERCPRDVKVTEII). 8 residues coordinate [4Fe-4S] cluster: Cys-34, Cys-37, Cys-40, Cys-44, Cys-77, Cys-80, Cys-83, and Cys-87.

It belongs to the HdrC family. The heterodisulfide reductase is composed of three subunits; HdrA, HdrB and HdrC. B1 and B2 subunits are interchangeable, as are the C1 and C2 subunits. The heterodisulfide reductase forms a supercomplex with formylmethanofuran dehydrogenase (Fwd), F(420)-non-reducing hydrogenase (Vhu) and formate dehydrogenase (Fdh). It depends on [4Fe-4S] cluster as a cofactor.

It carries out the reaction coenzyme B + coenzyme M + 2 reduced [2Fe-2S]-[ferredoxin] + 2 H(+) = coenzyme M-coenzyme B heterodisulfide + 2 H2 + 2 oxidized [2Fe-2S]-[ferredoxin]. The catalysed reaction is coenzyme B + coenzyme M + 2 reduced [2Fe-2S]-[ferredoxin] + 2 CO2 = coenzyme M-coenzyme B heterodisulfide + 2 formate + 2 oxidized [2Fe-2S]-[ferredoxin]. It participates in cofactor metabolism; coenzyme M-coenzyme B heterodisulfide reduction; coenzyme B and coenzyme M from coenzyme M-coenzyme B heterodisulfide: step 1/1. Functionally, part of a complex that catalyzes the reversible reduction of CoM-S-S-CoB to the thiol-coenzymes H-S-CoM (coenzyme M) and H-S-CoB (coenzyme B). The polypeptide is H(2)/formate:CoB-CoM heterodisulfide,ferredoxin reductase subunit C2 (Methanococcus maripaludis (strain DSM 14266 / JCM 13030 / NBRC 101832 / S2 / LL)).